Consider the following 592-residue polypeptide: Transmembrane 9 superfamily member 3 (592 aa).

Residues 1–19 form the signal peptide; sequence MRLPTTLLLFIGALIFSGA. At 20–229 the chain is on the lumenal side; the sequence is GTVRSDASDH…SLPHHLEIHW (210 aa). The helical transmembrane segment at 230–250 threads the bilayer; that stretch reads FSIINSCVTVLLLTGFLATIL. Residues 251-302 lie on the Cytoplasmic side of the membrane; that stretch reads MRVLKNDFMKYAQDEEAADDQEETGWKYIHGDVFRFPKNKSLFAASLGSGTQ. Residues 303-323 form a helical membrane-spanning segment; the sequence is LFTLTIFIFMLSLVGVFYPYN. At 324–325 the chain is on the lumenal side; that stretch reads RG. The chain crosses the membrane as a helical span at residues 326 to 346; the sequence is ALFTALVVIYALTSGIAGYTA. The Cytoplasmic portion of the chain corresponds to 347–365; it reads SSFYCQLEGKNWVRNLLLT. Residues 366-386 traverse the membrane as a helical segment; it reads GGLFCGPLFLTFCFLNTVAIA. At 387–397 the chain is on the lumenal side; it reads YSATAALPFGT. A helical membrane pass occupies residues 398-418; the sequence is IIVIVLIWTLVTSPLLVLGGI. Over 419-452 the chain is Cytoplasmic; that stretch reads AGKNSKAEFQAPVRTTKYPREIPPLPWYRSAVPQ. Residues 453 to 473 form a helical membrane-spanning segment; that stretch reads MAMAGFLPFSAIYIELYYIFA. Topologically, residues 474-485 are lumenal; it reads SVWGHRIYTIYS. A helical transmembrane segment spans residues 486–506; the sequence is ILFIVFIILLIVTAFITVALT. At 507-521 the chain is on the cytoplasmic side; it reads YFQLAAEDHEWWWRS. The helical transmembrane segment at 522–542 threads the bilayer; it reads FLCGGSTGLFIYAYCLYYYYA. Over 543–553 the chain is Lumenal; it reads RSDMSGFMQTS. A helical transmembrane segment spans residues 554-574; the sequence is FFFGYMACICYGFFLMLGTVG. Over 575-592 the chain is Cytoplasmic; the sequence is FRAALLFVRHIYRSIKCE. The short motif at 581–586 is the Endoplasmic reticulum export signal element; sequence FVRHIY. The Golgi retention signal signature appears at 590–592; sequence KCE.

The protein belongs to the nonaspanin (TM9SF) (TC 9.A.2) family.

Its subcellular location is the endosome membrane. The protein resides in the golgi apparatus membrane. The protein is Transmembrane 9 superfamily member 3 of Arabidopsis thaliana (Mouse-ear cress).